The primary structure comprises 244 residues: Monothiol glutaredoxin-4 (244 aa).

A Thioredoxin domain is found at 2 to 106 (SVEITFVEQF…LKAAIDEYIQ (105 aa)). Residues 147-244 (NERLSTLTNA…NGELQEMLPN (98 aa)) form the Glutaredoxin domain. Position 164 (Lys164) interacts with glutathione. Residue Cys172 coordinates [2Fe-2S] cluster. Glutathione is bound by residues 201–205 (RQGLK) and 226–227 (LD).

Belongs to the glutaredoxin family. Monothiol subfamily. In terms of assembly, homodimer. Interacts with php4.

The protein localises to the cytoplasm. Its subcellular location is the nucleus. Monothiol glutaredoxin involved in the biogenesis of iron-sulfur clusters. Binds one iron-sulfur cluster per dimer. The iron-sulfur cluster is bound between subunits, and is complexed by a bound glutathione and a cysteine residue from each subunit. The polypeptide is Monothiol glutaredoxin-4 (grx4) (Schizosaccharomyces pombe (strain 972 / ATCC 24843) (Fission yeast)).